A 46-amino-acid polypeptide reads, in one-letter code: Myoregulin (46 aa).

The Cytoplasmic segment spans residues 1-21 (MTGKNWILISTTTPKSLEDEI). Residues 22–42 (VGRLLKILFVIFVDLISIIYV) form a helical membrane-spanning segment. Over 43–46 (VITS) the chain is Lumenal.

In terms of assembly, homooligomer. Monomer. Interacts with ATP2A1/SERCA1. Interacts as a monomer with ATP2A2/SERCA2; the interaction inhibits ATP2A2 activity.

The protein resides in the sarcoplasmic reticulum membrane. In terms of biological role, inhibits the activity of ATP2A1/SERCA1 ATPase in sarcoplasmic reticulum by decreasing the apparent affinity of the ATPase for Ca(2+), thereby acting as a key regulator of skeletal muscle activity. Its high expression in adult skeletal muscle, suggests that it constitutes the predominant regulator of ATP2A1/SERCA1 in adult skeletal muscle. Also inhibits the activity of ATP2A2/SERCA2 and ATP2A3/SERCA3. This chain is Myoregulin, found in Homo sapiens (Human).